The following is a 334-amino-acid chain: tRNA-dihydrouridine synthase B (334 aa).

FMN contacts are provided by residues 16–18 (PMA) and Gln-70. The active-site Proton donor is the Cys-100. Residues Lys-139, 200 to 202 (NGD), and 224 to 225 (GR) contribute to the FMN site.

Belongs to the Dus family. DusB subfamily. The cofactor is FMN.

The catalysed reaction is a 5,6-dihydrouridine in tRNA + NAD(+) = a uridine in tRNA + NADH + H(+). It catalyses the reaction a 5,6-dihydrouridine in tRNA + NADP(+) = a uridine in tRNA + NADPH + H(+). In terms of biological role, catalyzes the synthesis of 5,6-dihydrouridine (D), a modified base found in the D-loop of most tRNAs, via the reduction of the C5-C6 double bond in target uridines. This chain is tRNA-dihydrouridine synthase B, found in Serratia marcescens.